Reading from the N-terminus, the 132-residue chain is Small ribosomal subunit protein uS8 (132 aa).

This sequence belongs to the universal ribosomal protein uS8 family. In terms of assembly, part of the 30S ribosomal subunit. Contacts proteins S5 and S12.

Functionally, one of the primary rRNA binding proteins, it binds directly to 16S rRNA central domain where it helps coordinate assembly of the platform of the 30S subunit. This is Small ribosomal subunit protein uS8 from Bacillus cytotoxicus (strain DSM 22905 / CIP 110041 / 391-98 / NVH 391-98).